The sequence spans 313 residues: Porphobilinogen deaminase (313 aa).

Position 242 is an S-(dipyrrolylmethanemethyl)cysteine (cysteine 242).

The protein belongs to the HMBS family. In terms of assembly, monomer. Dipyrromethane serves as cofactor.

The enzyme catalyses 4 porphobilinogen + H2O = hydroxymethylbilane + 4 NH4(+). It functions in the pathway porphyrin-containing compound metabolism; protoporphyrin-IX biosynthesis; coproporphyrinogen-III from 5-aminolevulinate: step 2/4. In terms of biological role, tetrapolymerization of the monopyrrole PBG into the hydroxymethylbilane pre-uroporphyrinogen in several discrete steps. This chain is Porphobilinogen deaminase, found in Escherichia coli O45:K1 (strain S88 / ExPEC).